A 282-amino-acid polypeptide reads, in one-letter code: MTEILDGAAVAKLTNEKTANRVAKLGKPVTLAVIYDPQNDGSRLYVGMKSKKAAALGIQTKDIPTAADATTESVLALVASLNADPSITGILVQSPLAKGVKEREIFSAVAPHKDADGLGATVQGMLFGDALDDYTVAATPQGVMTLLKHYNIDIFGKQALVIGRSQLFGRPMFALLTNADATVTLAHRYTPENVLKDYLKRADIVVVGVGKPDFIQGSDLKPGAVVIDVGMNFVNGKAVGDVNFDSVQSIASYITPVPGGVGPMTIATLLENTITLAENYQA.

163 to 165 (GRS) serves as a coordination point for NADP(+).

The protein belongs to the tetrahydrofolate dehydrogenase/cyclohydrolase family. Homodimer.

It catalyses the reaction (6R)-5,10-methylene-5,6,7,8-tetrahydrofolate + NADP(+) = (6R)-5,10-methenyltetrahydrofolate + NADPH. The enzyme catalyses (6R)-5,10-methenyltetrahydrofolate + H2O = (6R)-10-formyltetrahydrofolate + H(+). The protein operates within one-carbon metabolism; tetrahydrofolate interconversion. Catalyzes the oxidation of 5,10-methylenetetrahydrofolate to 5,10-methenyltetrahydrofolate and then the hydrolysis of 5,10-methenyltetrahydrofolate to 10-formyltetrahydrofolate. The polypeptide is Bifunctional protein FolD (Leuconostoc citreum (strain KM20)).